A 113-amino-acid polypeptide reads, in one-letter code: Cysteine proteinase inhibitor 6 (113 aa).

Residues 1-18 (MAMTTRTLLLAAVCAAAA) form the signal peptide. A Secondary area of contact motif is present at residues 65 to 69 (QVVSG).

Belongs to the cystatin family. Phytocystatin subfamily.

Its subcellular location is the secreted. In terms of biological role, specific inhibitor of cysteine proteinases. Probably involved in the regulation of endogenous processes and in defense against pests and pathogens. This Oryza sativa subsp. japonica (Rice) protein is Cysteine proteinase inhibitor 6.